Consider the following 483-residue polypeptide: Glutamate--tRNA ligase (483 aa).

A 'HIGH' region motif is present at residues 9–19; that stretch reads PSPTGNLHIGT. Positions 250–254 match the 'KMSKS' region motif; that stretch reads KLSKR. Position 253 (K253) interacts with ATP.

This sequence belongs to the class-I aminoacyl-tRNA synthetase family. Glutamate--tRNA ligase type 1 subfamily. Monomer.

The protein resides in the cytoplasm. The catalysed reaction is tRNA(Glu) + L-glutamate + ATP = L-glutamyl-tRNA(Glu) + AMP + diphosphate. Its function is as follows. Catalyzes the attachment of glutamate to tRNA(Glu) in a two-step reaction: glutamate is first activated by ATP to form Glu-AMP and then transferred to the acceptor end of tRNA(Glu). This Synechocystis sp. (strain ATCC 27184 / PCC 6803 / Kazusa) protein is Glutamate--tRNA ligase.